The primary structure comprises 340 residues: Lipase chaperone (340 aa).

Residues 4–24 traverse the membrane as a helical segment; it reads ILLLIPLAFAASLAWFVWLEP. The segment at 29–51 is disordered; sequence ETAPPASPQAGADRAPPAASAGE. The span at 36 to 51 shows a compositional bias: low complexity; sequence PQAGADRAPPAASAGE.

This sequence belongs to the lipase chaperone family.

Its subcellular location is the cell inner membrane. May be involved in the folding of the extracellular lipase during its passage through the periplasm. This Pseudomonas aeruginosa (strain ATCC 15692 / DSM 22644 / CIP 104116 / JCM 14847 / LMG 12228 / 1C / PRS 101 / PAO1) protein is Lipase chaperone (lifO).